Here is a 461-residue protein sequence, read N- to C-terminus: Argininosuccinate lyase (461 aa).

The protein belongs to the lyase 1 family. Argininosuccinate lyase subfamily.

It is found in the cytoplasm. The enzyme catalyses 2-(N(omega)-L-arginino)succinate = fumarate + L-arginine. Its pathway is amino-acid biosynthesis; L-arginine biosynthesis; L-arginine from L-ornithine and carbamoyl phosphate: step 3/3. The polypeptide is Argininosuccinate lyase (Clostridium beijerinckii (strain ATCC 51743 / NCIMB 8052) (Clostridium acetobutylicum)).